The following is a 229-amino-acid chain: RNA pyrophosphohydrolase (229 aa).

Residues 6 to 149 (GFRPNVGIIL…KRGVYEMALT (144 aa)) enclose the Nudix hydrolase domain. Residues 38 to 59 (GGIDRGETPEQAMFRELHEEVG) carry the Nudix box motif. A disordered region spans residues 191-229 (KPGMELPPGASFDPDPQNSVPAPLEALPTLPVPKKPLDA). Positions 220 to 229 (LPVPKKPLDA) are enriched in pro residues.

It belongs to the Nudix hydrolase family. RppH subfamily. A divalent metal cation serves as cofactor.

Accelerates the degradation of transcripts by removing pyrophosphate from the 5'-end of triphosphorylated RNA, leading to a more labile monophosphorylated state that can stimulate subsequent ribonuclease cleavage. This Acidovorax ebreus (strain TPSY) (Diaphorobacter sp. (strain TPSY)) protein is RNA pyrophosphohydrolase.